The chain runs to 450 residues: Tubulin alpha-6 chain (450 aa).

The GTP site is built by Gln-11, Glu-71, Gly-144, Thr-145, Thr-179, Asn-206, and Asn-228. Glu-71 lines the Mg(2+) pocket. The active site involves Glu-254. At Thr-349 the chain carries Phosphothreonine. The disordered stretch occupies residues 430–450; it reads KDYEEVGAEGGDDEDDEGEEY. Over residues 431-450 the composition is skewed to acidic residues; that stretch reads DYEEVGAEGGDDEDDEGEEY.

It belongs to the tubulin family. As to quaternary structure, dimer of alpha and beta chains. A typical microtubule is a hollow water-filled tube with an outer diameter of 25 nm and an inner diameter of 15 nM. Alpha-beta heterodimers associate head-to-tail to form protofilaments running lengthwise along the microtubule wall with the beta-tubulin subunit facing the microtubule plus end conferring a structural polarity. Microtubules usually have 13 protofilaments but different protofilament numbers can be found in some organisms and specialized cells. Interacts with TFCB. Requires Mg(2+) as cofactor. Undergoes a tyrosination/detyrosination cycle, the cyclic removal and re-addition of a C-terminal tyrosine residue by the enzymes tubulin tyrosine carboxypeptidase (TTCP) and tubulin tyrosine ligase (TTL), respectively. In terms of processing, acetylation of alpha chains at Lys-40 stabilizes microtubules and affects affinity and processivity of microtubule motors. This modification has a role in multiple cellular functions, ranging from cell motility, cell cycle progression or cell differentiation to intracellular trafficking and signaling.

It is found in the cytoplasm. Its subcellular location is the cytoskeleton. It carries out the reaction GTP + H2O = GDP + phosphate + H(+). Tubulin is the major constituent of microtubules, a cylinder consisting of laterally associated linear protofilaments composed of alpha- and beta-tubulin heterodimers. Microtubules grow by the addition of GTP-tubulin dimers to the microtubule end, where a stabilizing cap forms. Below the cap, tubulin dimers are in GDP-bound state, owing to GTPase activity of alpha-tubulin. In Arabidopsis thaliana (Mouse-ear cress), this protein is Tubulin alpha-6 chain (TUBA6).